Consider the following 345-residue polypeptide: S-adenosylmethionine:tRNA ribosyltransferase-isomerase (345 aa).

Belongs to the QueA family. In terms of assembly, monomer.

The protein localises to the cytoplasm. It catalyses the reaction 7-aminomethyl-7-carbaguanosine(34) in tRNA + S-adenosyl-L-methionine = epoxyqueuosine(34) in tRNA + adenine + L-methionine + 2 H(+). Its pathway is tRNA modification; tRNA-queuosine biosynthesis. Transfers and isomerizes the ribose moiety from AdoMet to the 7-aminomethyl group of 7-deazaguanine (preQ1-tRNA) to give epoxyqueuosine (oQ-tRNA). This Shewanella loihica (strain ATCC BAA-1088 / PV-4) protein is S-adenosylmethionine:tRNA ribosyltransferase-isomerase.